A 250-amino-acid chain; its full sequence is Bcl-2-like protein 12 (250 aa).

The tract at residues 24–46 (GEAAGSPVPTPPRSPAQEEPTDF) is disordered. Phosphoserine is present on S29. T33 bears the Phosphothreonine mark. A Phosphoserine modification is found at S37. R60 is modified (omega-N-methylarginine). Residues S111, S158, S159, S161, and S189 each carry the phosphoserine modification. Positions 227-238 (WIQAHGGWEGIL) match the BH2 motif.

Belongs to the Bcl-2 family. In terms of tissue distribution, expressed mainly in breast, thymus, prostate, fetal liver, colon, placenta, pancreas, small intestine, spinal cord, kidney, and bone marrow and to a lesser extent in many other tissues. Isoform 2 is primarily expressed in skeletal muscle.

The protein is Bcl-2-like protein 12 of Homo sapiens (Human).